We begin with the raw amino-acid sequence, 85 residues long: Putative membrane protein insertion efficiency factor (85 aa).

The protein belongs to the UPF0161 family.

It is found in the cell membrane. Could be involved in insertion of integral membrane proteins into the membrane. The chain is Putative membrane protein insertion efficiency factor from Baumannia cicadellinicola subsp. Homalodisca coagulata.